The chain runs to 365 residues: MRPTEINPADYEQQLAQKVNSVQQAFKTFSMPALEAFSSAPLNYRMRAEFRMWHDGDNLDHVMFDQSTKQKYAVNQFPPASIVINEVMMKLLSLVKKNEVLRRKLFQIDYLSTLTNEILVTLVYHKPLEDEWLKEAKALRALLRDEFKIDIIGRAKKQKVLLDKDYVIETLPVNDRLYTFKQIENSFTQPNAGVNSKMLEWALDVTQDCQGDLLELYCGAGNFSLPLAQNFRQVLATEISKSSVAAAQDNIRLNNIENVTILRMSSEEFVQALNNERSFRRLEGINLQDYDCQTVLVDPPRSGLDDDTLDMIKEYQNIVYISCNPETLNNNLAVLSETHNVVRFALFDQFPYTHHVESGVYLQKR.

S-adenosyl-L-methionine-binding residues include Q189, Y217, N222, E238, and D298. C323 acts as the Nucleophile in catalysis. The active-site Proton acceptor is the E357.

It belongs to the class I-like SAM-binding methyltransferase superfamily. RNA M5U methyltransferase family. TrmA subfamily.

The enzyme catalyses uridine(54) in tRNA + S-adenosyl-L-methionine = 5-methyluridine(54) in tRNA + S-adenosyl-L-homocysteine + H(+). The catalysed reaction is uridine(341) in tmRNA + S-adenosyl-L-methionine = 5-methyluridine(341) in tmRNA + S-adenosyl-L-homocysteine + H(+). In terms of biological role, dual-specificity methyltransferase that catalyzes the formation of 5-methyluridine at position 54 (m5U54) in all tRNAs, and that of position 341 (m5U341) in tmRNA (transfer-mRNA). This is tRNA/tmRNA (uracil-C(5))-methyltransferase from Pseudoalteromonas atlantica (strain T6c / ATCC BAA-1087).